A 116-amino-acid chain; its full sequence is Protein Rev (116 aa).

A phosphoserine; by host CK2 mark is found at serine 5 and serine 8. Residues 18 to 26 (LIKVLYQSN) are homomultimerization. Residues 23–48 (YQSNPPPSSEGTRQARRNRRRRWRER) form a disordered region. The short motif at 34–50 (TRQARRNRRRRWRERQR) is the Nuclear localization signal and RNA-binding (RRE) element. Over residues 36 to 47 (QARRNRRRRWRE) the composition is skewed to basic residues. The short motif at 73 to 84 (FQLPPLERLTLD) is the Nuclear export signal and binding to XPO1 element. The interval 90–116 (GTSGTQGVGSPQILVESPPVLDSGTKE) is disordered. Phosphoserine; by host occurs at positions 92 and 99.

Belongs to the HIV-1 REV protein family. In terms of assembly, homomultimer; when bound to the RRE. Multimeric assembly is essential for activity and may involve XPO1. Binds to human KPNB1, XPO1, TNPO1, RANBP5 and IPO7. Interacts with the viral Integrase. Interacts with human KHDRBS1. Interacts with human NAP1; this interaction decreases Rev multimerization and stimulates its activity. Interacts with human DEAD-box helicases DDX3 and DDX24; these interactions may serve for viral RNA export to the cytoplasm and packaging, respectively. Interacts with human PSIP1; this interaction may inhibit HIV-1 DNA integration by promoting dissociation of the Integrase-LEDGF/p75 complex. Post-translationally, asymmetrically arginine dimethylated at one site by host PRMT6. Methylation impairs the RNA-binding activity and export of viral RNA from the nucleus to the cytoplasm. Phosphorylated by protein kinase CK2. Presence of, and maybe binding to the N-terminus of the regulatory beta subunit of CK2 is necessary for CK2-mediated Rev's phosphorylation.

The protein localises to the host nucleus. The protein resides in the host nucleolus. Its subcellular location is the host cytoplasm. In terms of biological role, escorts unspliced or incompletely spliced viral pre-mRNAs (late transcripts) out of the nucleus of infected cells. These pre-mRNAs carry a recognition sequence called Rev responsive element (RRE) located in the env gene, that is not present in fully spliced viral mRNAs (early transcripts). This function is essential since most viral proteins are translated from unspliced or partially spliced pre-mRNAs which cannot exit the nucleus by the pathway used by fully processed cellular mRNAs. Rev itself is translated from a fully spliced mRNA that readily exits the nucleus. Rev's nuclear localization signal (NLS) binds directly to KPNB1/Importin beta-1 without previous binding to KPNA1/Importin alpha-1. KPNB1 binds to the GDP bound form of RAN (Ran-GDP) and targets Rev to the nucleus. In the nucleus, the conversion from Ran-GDP to Ran-GTP dissociates Rev from KPNB1 and allows Rev's binding to the RRE in viral pre-mRNAs. Rev multimerization on the RRE via cooperative assembly exposes its nuclear export signal (NES) to the surface. Rev can then form a complex with XPO1/CRM1 and Ran-GTP, leading to nuclear export of the complex. Conversion from Ran-GTP to Ran-GDP mediates dissociation of the Rev/RRE/XPO1/RAN complex, so that Rev can return to the nucleus for a subsequent round of export. Beside KPNB1, also seems to interact with TNPO1/Transportin-1, RANBP5/IPO5 and IPO7/RANBP7 for nuclear import. The nucleoporin-like HRB/RIP is an essential cofactor that probably indirectly interacts with Rev to release HIV RNAs from the perinuclear region to the cytoplasm. This chain is Protein Rev, found in Human immunodeficiency virus type 1 group M subtype B (isolate YU-2) (HIV-1).